A 1203-amino-acid polypeptide reads, in one-letter code: Metabotropic glutamate receptor 5 (1203 aa).

An N-terminal signal peptide occupies residues methionine 1–glycine 18. The Extracellular portion of the chain corresponds to serine 19–proline 579. Cysteine 57 and cysteine 99 are disulfide-bonded. Residue tyrosine 64 coordinates L-glutamate. Residue asparagine 88 is glycosylated (N-linked (GlcNAc...) asparagine). L-glutamate is bound by residues serine 151 and serine 172–threonine 174. An N-linked (GlcNAc...) asparagine glycan is attached at asparagine 209. Tyrosine 222 contacts L-glutamate. Intrachain disulfides connect cysteine 240–cysteine 529, cysteine 275–cysteine 277, cysteine 364–cysteine 380, cysteine 418–cysteine 425, cysteine 510–cysteine 530, cysteine 514–cysteine 533, cysteine 536–cysteine 548, and cysteine 551–cysteine 564. Aspartate 304 contacts L-glutamate. Asparagine 377 and asparagine 381 each carry an N-linked (GlcNAc...) asparagine glycan. Residue lysine 395 coordinates L-glutamate. Asparagine 444 carries N-linked (GlcNAc...) asparagine glycosylation. Residues isoleucine 580–isoleucine 602 traverse the membrane as a helical segment. Topologically, residues tyrosine 603 to serine 612 are cytoplasmic. The chain crosses the membrane as a helical span at residues serine 613 to isoleucine 635. The Extracellular segment spans residues alanine 636–cysteine 643. Cysteine 643 and cysteine 732 are oxidised to a cystine. Residues tyrosine 644–asparagine 666 traverse the membrane as a helical segment. At arginine 667–glutamine 692 the chain is on the cytoplasmic side. A helical transmembrane segment spans residues leucine 693 to methionine 713. Residues glutamate 714–asparagine 736 lie on the Extracellular side of the membrane. N-linked (GlcNAc...) asparagine glycosylation occurs at asparagine 733. Residues leucine 737 to phenylalanine 758 traverse the membrane as a helical segment. Over lysine 759–lysine 771 the chain is Cytoplasmic. The chain crosses the membrane as a helical span at residues tyrosine 772–serine 794. Residues asparagine 795–lysine 797 lie on the Extracellular side of the membrane. Residues isoleucine 798–proline 819 traverse the membrane as a helical segment. The Cytoplasmic portion of the chain corresponds to lysine 820–leucine 1203. Position 860 is a phosphoserine (serine 860). Arginine 868 is modified (omega-N-methylarginine). 2 disordered regions span residues phenylalanine 892–methionine 1054 and threonine 1120–isoleucine 1182. Polar residues predominate over residues threonine 905–glutamate 920. Omega-N-methylarginine is present on arginine 924. Over residues glutamine 960–serine 977 the composition is skewed to gly residues. Positions proline 1007–serine 1019 are enriched in low complexity. A phosphoserine mark is found at serine 1014 and serine 1016. 2 stretches are compositionally biased toward polar residues: residues histidine 1039 to methionine 1054 and aspartate 1165 to serine 1176.

It belongs to the G-protein coupled receptor 3 family. As to quaternary structure, the PPXXF motif binds HOMER1, HOMER2 and HOMER3. Interacts with RYR1, RYR2, ITPR1, SHANK1 and SHANK3. Interacts with SIAH1 and TAMALIN. Interacts with NCDN. Interacts with NECAB2. Interacts with CAMK2A.

The protein resides in the cell membrane. In terms of biological role, G-protein coupled receptor for glutamate. Ligand binding causes a conformation change that triggers signaling via guanine nucleotide-binding proteins (G proteins) and modulates the activity of down-stream effectors. Signaling activates a phosphatidylinositol-calcium second messenger system and generates a calcium-activated chloride current. Plays an important role in the regulation of synaptic plasticity and the modulation of the neural network activity. The chain is Metabotropic glutamate receptor 5 (Grm5) from Mus musculus (Mouse).